The primary structure comprises 947 residues: Valine--tRNA ligase (947 aa).

The short motif at 45 to 55 is the 'HIGH' region element; that stretch reads PNVTGSLHMGH. The short motif at 591–595 is the 'KMSKS' region element; the sequence is KMSKS. Lysine 594 is a binding site for ATP. Positions 879–943 form a coiled coil; the sequence is DLAAEQARLE…ASLRTALTRV (65 aa).

This sequence belongs to the class-I aminoacyl-tRNA synthetase family. ValS type 1 subfamily. In terms of assembly, monomer.

The protein resides in the cytoplasm. The enzyme catalyses tRNA(Val) + L-valine + ATP = L-valyl-tRNA(Val) + AMP + diphosphate. Its function is as follows. Catalyzes the attachment of valine to tRNA(Val). As ValRS can inadvertently accommodate and process structurally similar amino acids such as threonine, to avoid such errors, it has a 'posttransfer' editing activity that hydrolyzes mischarged Thr-tRNA(Val) in a tRNA-dependent manner. The protein is Valine--tRNA ligase of Agrobacterium fabrum (strain C58 / ATCC 33970) (Agrobacterium tumefaciens (strain C58)).